A 221-amino-acid polypeptide reads, in one-letter code: Transcription repressor OFP8 (221 aa).

Residues 124–138 (EDEGDKEESEDDDSD) show a composition bias toward acidic residues. Residues 124-147 (EDEGDKEESEDDDSDTLFSSRSFS) are disordered. The region spanning 158–217 (VVKKSKDPYEDFRTSMVEMIVERQIFAPAELQQLLQCFLSLNSRQHHKVIVQVFLEIYAT) is the OVATE domain.

As to expression, expressed in roots, rosette and cauline leaves, shoots, stems, flower buds and siliques.

It is found in the nucleus. Functionally, transcriptional repressor that regulates multiple aspects of plant growth and development through the regulation of BEL1-LIKE (BLH) and KNOX TALE (KNAT) homeodomain transcription factors. The sequence is that of Transcription repressor OFP8 (OFP8) from Arabidopsis thaliana (Mouse-ear cress).